The following is a 318-amino-acid chain: NAC domain-containing protein 59 (318 aa).

The NAC domain occupies 24 to 174 (LPPGFRFHPT…ECVISRVFHT (151 aa)). A DNA-binding region spans residues 121–180 (VGMKKTLVFYKGRAPKGVKTNWVMHEYRLEGKFAIDNLSKTAKNECVISRVFHTRTDGTK).

Mostly expressed in root cortex, phloem, atrichoblast and quiescent center (QC), and, to a lower extent, in root endodermis, xylem, pericycle, columella and lateral root cap (LRC). Expressed in roots, cotyledons, very young leaves, senescing leaves, mature flowers and pollen.

The protein resides in the nucleus. Transcription activator that binds to DNA in promoters of target genes on a specific bipartite motif 5'-[AG]CGT[AG](4-5n)[AG][CT]ACGCAA-3'. Triggers the expression of senescence-associated genes during age-, salt- and dark-induced senescence through a regulatory network that may involve cross-talk with salt- and H(2)O(2)-dependent signaling pathways. This is NAC domain-containing protein 59 from Arabidopsis thaliana (Mouse-ear cress).